A 346-amino-acid polypeptide reads, in one-letter code: Cytosolic sulfotransferase 17 (346 aa).

Residue 89–94 coordinates 3'-phosphoadenylyl sulfate; it reads KTGTTW. The Proton acceptor role is filled by His-151. 3'-phosphoadenylyl sulfate is bound by residues Arg-173, Ser-181, Tyr-239, and 309–311; that span reads RKG.

This sequence belongs to the sulfotransferase 1 family. In terms of tissue distribution, highly expressed in roots, stems and mature leaves. Low expression in young leaves and flowers. Barely detected in siliques.

Its subcellular location is the cytoplasm. The catalysed reaction is an aliphatic (Z)-desulfo-glucosinolate + 3'-phosphoadenylyl sulfate = a (Z)-omega-(methylsulfanyl)-N-sulfo-alkylhydroximate S-glucoside + adenosine 3',5'-bisphosphate + H(+). With respect to regulation, inhibited by phosphoadenosine 5'-phosphate (PAP). Sulfotransferase that utilizes 3'-phospho-5'-adenylyl sulfate (PAPS) as sulfonate donor to catalyze the sulfate conjugation of desulfo-glucosinolates (dsGSs), the final step in the biosynthesis of the glucosinolate core structure. Substrate preference is desulfo-benzyl glucosinolate &gt; desulfo-6-methylthiohexyl glucosinolate. Increased specific activity with increasing chain length of desulfo-glucosinolate derived from methionine. Preferred substrate is desulfo-8-methylthiooctyl glucosinolate. In Arabidopsis thaliana (Mouse-ear cress), this protein is Cytosolic sulfotransferase 17 (SOT17).